The chain runs to 118 residues: Putative pterin-4-alpha-carbinolamine dehydratase (118 aa).

Belongs to the pterin-4-alpha-carbinolamine dehydratase family.

The catalysed reaction is (4aS,6R)-4a-hydroxy-L-erythro-5,6,7,8-tetrahydrobiopterin = (6R)-L-erythro-6,7-dihydrobiopterin + H2O. The chain is Putative pterin-4-alpha-carbinolamine dehydratase from Pseudomonas paraeruginosa (strain DSM 24068 / PA7) (Pseudomonas aeruginosa (strain PA7)).